The chain runs to 535 residues: Alpha-1,3-mannosyl-glycoprotein 4-beta-N-acetylglucosaminyltransferase A (535 aa).

The Cytoplasmic segment spans residues 1-4 (MRLR). A helical; Signal-anchor for type II membrane protein transmembrane segment spans residues 5–27 (NGTVATALAFITSFLTLSWYTTW). Residues 28 to 63 (QNGKEKLIAYQREFLALKERLRIAEHRISQRSSELN) are a coiled coil. Residues 28–535 (QNGKEKLIAY…NEIHIKKATK (508 aa)) lie on the Lumenal side of the membrane. Residues asparagine 77 and asparagine 458 are each glycosylated (N-linked (GlcNAc...) asparagine). Serine 474 is subject to Phosphoserine.

This sequence belongs to the glycosyltransferase 54 family. The cofactor is a divalent metal cation. N-glycosylated.

It localises to the golgi apparatus membrane. Its subcellular location is the secreted. It carries out the reaction N(4)-{beta-D-GlcNAc-(1-&gt;2)-alpha-D-Man-(1-&gt;3)-[beta-D-GlcNAc-(1-&gt;2)-alpha-D-Man-(1-&gt;6)]-beta-D-Man-(1-&gt;4)-beta-D-GlcNAc-(1-&gt;4)-beta-D-GlcNAc}-L-asparaginyl-[protein] + UDP-N-acetyl-alpha-D-glucosamine = N(4)-{beta-D-GlcNAc-(1-&gt;2)-[beta-D-GlcNAc-(1-&gt;4)]-alpha-D-Man-(1-&gt;3)-[beta-D-GlcNAc-(1-&gt;2)-alpha-D-Man-(1-&gt;6)]-beta-D-Man-(1-&gt;4)-beta-D-GlcNAc-(1-&gt;4)-beta-D-GlcNAc}-L-asparaginyl-[protein] + UDP + H(+). The catalysed reaction is an N(4)-{beta-D-GlcNAc-(1-&gt;2)-alpha-D-Man-(1-&gt;3)-[alpha-D-Man-(1-&gt;6)]-beta-D-Man-(1-&gt;4)-beta-D-GlcNAc-(1-&gt;4)-beta-D-GlcNAc}-L-asparaginyl-[protein] + UDP-N-acetyl-alpha-D-glucosamine = an N(4)-{beta-D-GlcNAc-(1-&gt;2)-[beta-D-GlcNAc-(1-&gt;4)]-alpha-D-Man-(1-&gt;3)-[alpha-D-Man-(1-&gt;6)]-beta-D-Man-(1-&gt;4)-beta-D-GlcNAc-(1-&gt;4)-beta-D-GlcNAc}-L-asparaginyl-[protein] + UDP + H(+). The enzyme catalyses an N(4)-{beta-D-GlcNAc-(1-&gt;2)-alpha-D-Man-(1-&gt;3)-[beta-D-GlcNAc-(1-&gt;2)-[beta-D-GlcNAc-(1-&gt;6)]-alpha-D-Man-(1-&gt;6)]-beta-D-Man-(1-&gt;4)-beta-D-GlcNAc-(1-&gt;4)-beta-D-GlcNAc}-L-asparaginyl-[protein] + UDP-N-acetyl-alpha-D-glucosamine = an N(4)-{beta-D-GlcNAc-(1-&gt;2)-[beta-D-GlcNAc-(1-&gt;4)]-alpha-D-Man-(1-&gt;3)-[beta-D-GlcNAc-(1-&gt;2)-[beta-D-GlcNAc-(1-&gt;6)]-alpha-D-Man-(1-&gt;6)]-beta-D-Man-(1-&gt;4)-beta-D-GlcNAc-(1-&gt;4)-beta-D-GlcNAc}-L-asparaginyl-[protein] + UDP + H(+). It catalyses the reaction an N(4)-{beta-D-GlcNAc-(1-&gt;2)-alpha-D-Man-(1-&gt;3)-[beta-D-GlcNAc-(1-&gt;2)-alpha-D-Man-(1-&gt;6)]-beta-D-Man-(1-&gt;4)-beta-D-GlcNAc-(1-&gt;4)-[alpha-L-Fuc-(1-&gt;6)]-beta-D-GlcNAc}-L-asparaginyl-[protein] + UDP-N-acetyl-alpha-D-glucosamine = N(4)-{beta-D-GlcNAc-(1-&gt;2)-[beta-D-GlcNAc-(1-&gt;4)]-alpha-D-Man-(1-&gt;3)-[beta-D-GlcNAc-(1-&gt;2)-alpha-D-Man-(1-&gt;6)]-beta-D-Man-(1-&gt;4)-beta-D-GlcNAc-(1-&gt;4)-[alpha-L-Fuc-(1-&gt;6)]-beta-D-GlcNAc}-asparaginyl-[protein] + UDP + H(+). It carries out the reaction an N(4)-{beta-D-GlcNAc-(1-&gt;2)-alpha-D-Man-(1-&gt;3)-[beta-D-Gal-(1-&gt;4)-beta-D-GlcNAc-(1-&gt;2)-alpha-D-Man-(1-&gt;6)]-beta-D-Man-(1-&gt;4)-beta-D-GlcNAc-(1-&gt;4)-beta-D-GlcNAc}-L-asparaginyl-[protein] + UDP-N-acetyl-alpha-D-glucosamine = an N(4)-{beta-D-GlcNAc-(1-&gt;2)-[beta-D-GlcNAc-(1-&gt;4)]-alpha-D-Man-(1-&gt;3)-[beta-D-Gal-(1-&gt;4)-beta-D-GlcNAc-(1-&gt;2)-alpha-D-Man-(1-&gt;6)]-beta-D-Man-(1-&gt;4)-beta-D-GlcNAc-(1-&gt;4)-beta-D-GlcNAc}-L-asparaginyl-[protein] + UDP + H(+). The catalysed reaction is N(4)-{beta-D-GlcNAc-(1-&gt;2)-alpha-D-Man-(1-&gt;3)-[alpha-D-Man-(1-&gt;3)-{alpha-D-Man-(1-&gt;6)}-alpha-D-Man-(1-&gt;6)]-beta-D-Man-(1-&gt;4)-beta-D-GlcNAc-(1-&gt;4)-beta-D-GlcNAc}-asparaginyl-[protein] + UDP-N-acetyl-alpha-D-glucosamine = N(4)-{beta-D-GlcNAc-(1-&gt;2)-[beta-D-GlcNAc-(1-&gt;4)]-alpha-D-Man-(1-&gt;3)-[alpha-D-Man-(1-&gt;3)-{alpha-D-Man-(1-&gt;6)}-alpha-D-Man-(1-&gt;6)]-beta-D-Man-(1-&gt;4)-beta-D-GlcNAc-(1-&gt;4)-beta-D-GlcNAc}-asparaginyl-[protein] + UDP + H(+). The enzyme catalyses N(4)-{beta-D-GlcNAc-(1-&gt;2)-alpha-D-Man-(1-&gt;3)-beta-D-Man-(1-&gt;4)-beta-D-GlcNAc-(1-&gt;4)-beta-D-GlcNAc}-asparaginyl-[protein] + UDP-N-acetyl-alpha-D-glucosamine = N(4)-{beta-D-GlcNAc-(1-&gt;2)-[beta-D-GlcNAc-(1-&gt;4)]-alpha-D-Man-(1-&gt;3)-beta-D-Man-(1-&gt;4)-beta-D-GlcNAc-(1-&gt;4)-beta-D-GlcNAc}-asparaginyl-[protein] + UDP + H(+). Its pathway is protein modification; protein glycosylation. Its activity is regulated as follows. Inhibited by UDP. Functionally, glycosyltransferase that catalyze the transfer of GlcNAc from UDP-GlcNAc to the GlcNAcbeta1-2Manalpha1-3 arm of the core structure of N-linked glycans through a beta1-4 linkage and participates in the production of tri- and tetra-antennary N-linked sugar chains. Involved in glucose transport by mediating SLC2A2/GLUT2 glycosylation, thereby controlling cell-surface expression of SLC2A2 in pancreatic beta cells. The sequence is that of Alpha-1,3-mannosyl-glycoprotein 4-beta-N-acetylglucosaminyltransferase A from Macaca fascicularis (Crab-eating macaque).